Consider the following 617-residue polypeptide: Glutamyl-tRNA(Gln) amidotransferase subunit B, mitochondrial (617 aa).

A mitochondrion-targeting transit peptide spans 1–56 (MPRIPTSVLGKYLLSGQISRQGCVGARQITRHSALPSAAVSVANSARLLHVSSETV). Residues 53 to 90 (SETVPPPPAQPVPLRKQLKDEAKKAKKQGKKKSKGDSQ) are disordered. A compositionally biased stretch (basic residues) spans 76-85 (KAKKQGKKKS).

This sequence belongs to the GatB/GatE family. GatB subfamily. In terms of assembly, subunit of the heterotrimeric GatCAB amidotransferase (AdT) complex, composed of A, B and C subunits.

The protein localises to the mitochondrion. It catalyses the reaction L-glutamyl-tRNA(Gln) + L-glutamine + ATP + H2O = L-glutaminyl-tRNA(Gln) + L-glutamate + ADP + phosphate + H(+). In terms of biological role, allows the formation of correctly charged Gln-tRNA(Gln) through the transamidation of misacylated Glu-tRNA(Gln) in the mitochondria. The reaction takes place in the presence of glutamine and ATP through an activated gamma-phospho-Glu-tRNA(Gln). The polypeptide is Glutamyl-tRNA(Gln) amidotransferase subunit B, mitochondrial (Fusarium vanettenii (strain ATCC MYA-4622 / CBS 123669 / FGSC 9596 / NRRL 45880 / 77-13-4) (Fusarium solani subsp. pisi)).